The primary structure comprises 2544 residues: Highly reducing polyketide synthase pkhB (2544 aa).

Positions 9 to 438 (SEPIAIIGMS…GTNAHVILES (430 aa)) constitute a Ketosynthase family 3 (KS3) domain. Active-site for beta-ketoacyl synthase activity residues include Cys-182, His-317, and His-358. The tract at residues 566–876 (VFTGQVFRRS…PYWGCLVRDE (311 aa)) is malonyl-CoA:ACP transacylase (MAT) domain. An N-terminal hotdog fold region spans residues 948–1082 (HELLGMPVAG…GMVGIEESAV (135 aa)). The segment at 948 to 1252 (HELLGMPVAG…VELAALGRGS (305 aa)) is dehydratase (DH) domain. In terms of domain architecture, PKS/mFAS DH spans 948 to 1254 (HELLGMPVAG…LAALGRGSSA (307 aa)). His-980 acts as the Proton acceptor; for dehydratase activity in catalysis. A C-terminal hotdog fold region spans residues 1095–1254 (YTRQPNPQDL…LAALGRGSSA (160 aa)). The active-site Proton donor; for dehydratase activity is Asp-1165. Positions 1398 to 1573 (SSLRQLSALL…FSGLDLEIYD (176 aa)) are methyltransferase (CMet) domain. Residues 1826–2142 (GHLGTLAFAE…TGDQMGKVVL (317 aa)) are enoyl reductase (ER) domain. Residues 2169-2356 (ASYLIVGGVG…GVAIDLGPIS (188 aa)) form a ketoreductase (KR) domain region. The region spanning 2462 to 2539 (EGARLIGAAI…ALAGLVAEKS (78 aa)) is the Carrier domain. Ser-2499 bears the O-(pantetheine 4'-phosphoryl)serine mark.

Requires pantetheine 4'-phosphate as cofactor.

It functions in the pathway secondary metabolite biosynthesis. Its function is as follows. Highly reducing polyketide synthase; part of the pkh gene cluster that mediates the biosynthesis of 2,4-dihydroxy-6-[(3E,5E,7E)-2-oxonona-3,5,7-trienyl]benzaldehyde. The highly reducing polyketide synthase pkhB first produces the (2E,4E,6E)-octa-2,4,6-trienyl strater unit for the non-reducing polyketide synthase pkhA. This octatrienoyl starter is then loaded onto the SAT domain of the NR-PKS pkhA to be condensed with 4 malonyl-CoA units to yield 2,4-dihydroxy-6-[(3E,5E,7E)-2-oxonona-3,5,7-trienyl]benzaldehyde. This chain is Highly reducing polyketide synthase pkhB, found in Emericella nidulans (strain FGSC A4 / ATCC 38163 / CBS 112.46 / NRRL 194 / M139) (Aspergillus nidulans).